A 349-amino-acid polypeptide reads, in one-letter code: Hydroxymethylglutaryl-CoA synthase (349 aa).

2 residues coordinate (3S)-3-hydroxy-3-methylglutaryl-CoA: D30 and A31. The Proton donor/acceptor role is filled by E82. C114 and T155 together coordinate (3S)-3-hydroxy-3-methylglutaryl-CoA. The Acyl-thioester intermediate role is filled by C114. A CoA-binding site is contributed by R203. (3S)-3-hydroxy-3-methylglutaryl-CoA contacts are provided by T205 and H238. H238 (proton donor/acceptor) is an active-site residue. K243 lines the CoA pocket. The (3S)-3-hydroxy-3-methylglutaryl-CoA site is built by N270 and S300.

It belongs to the thiolase-like superfamily. Archaeal HMG-CoA synthase family. In terms of assembly, interacts with acetoacetyl-CoA thiolase that catalyzes the precedent step in the pathway and with a DUF35 protein. The acetoacetyl-CoA thiolase/HMG-CoA synthase complex channels the intermediate via a fused CoA-binding site, which allows for efficient coupling of the endergonic thiolase reaction with the exergonic HMGCS reaction.

It catalyses the reaction acetoacetyl-CoA + acetyl-CoA + H2O = (3S)-3-hydroxy-3-methylglutaryl-CoA + CoA + H(+). It participates in metabolic intermediate biosynthesis; (R)-mevalonate biosynthesis; (R)-mevalonate from acetyl-CoA: step 2/3. In terms of biological role, catalyzes the condensation of acetyl-CoA with acetoacetyl-CoA to form 3-hydroxy-3-methylglutaryl-CoA (HMG-CoA). Functions in the mevalonate (MVA) pathway leading to isopentenyl diphosphate (IPP), a key precursor for the biosynthesis of isoprenoid compounds that are building blocks of archaeal membrane lipids. The protein is Hydroxymethylglutaryl-CoA synthase of Methanococcus maripaludis (strain C6 / ATCC BAA-1332).